Here is a 264-residue protein sequence, read N- to C-terminus: Merozoite surface protein 2 (264 aa).

The N-terminal stretch at Met-1 to Ile-20 is a signal peptide. Asn-22 and Asn-36 each carry an N-linked (GlcNAc...) asparagine glycan. The interval Ala-44–Ala-190 is polymorphic region. The disordered stretch occupies residues Glu-46–Asn-225. Repeat copies occupy residues Ala-60–Ala-91 and Ala-92–Ala-123. Residues Ala-60–Ala-123 form a 2 X 32 AA perfects repeats region. Low complexity predominate over residues Ser-70 to Asn-81. The span at Gly-82 to Arg-101 shows a compositional bias: polar residues. Residues Ser-102–Ser-145 are compositionally biased toward low complexity. The N-linked (GlcNAc...) asparagine glycan is linked to Asn-152. Positions Thr-154–Glu-166 are enriched in basic and acidic residues. Asn-168 and Asn-213 each carry an N-linked (GlcNAc...) asparagine glycan. Cysteines 221 and 229 form a disulfide. N-linked (GlcNAc...) asparagine glycosylation is found at Asn-237 and Asn-238. Asn-238 carries the GPI-anchor amidated asparagine lipid modification. A propeptide spans Ser-239–Ile-264 (removed in mature form).

The protein localises to the cell membrane. In terms of biological role, may play a role in the merozoite attachment to the erythrocyte. The protein is Merozoite surface protein 2 of Plasmodium falciparum (isolate fid3 / India).